Reading from the N-terminus, the 562-residue chain is Dihydroxy-acid dehydratase (562 aa).

A [2Fe-2S] cluster-binding site is contributed by C55. Mg(2+) is bound at residue D87. Residue C128 coordinates [2Fe-2S] cluster. The Mg(2+) site is built by D129 and K130. N6-carboxylysine is present on K130. C200 provides a ligand contact to [2Fe-2S] cluster. Position 451 (E451) interacts with Mg(2+). S477 acts as the Proton acceptor in catalysis.

Belongs to the IlvD/Edd family. As to quaternary structure, homodimer. [2Fe-2S] cluster serves as cofactor. The cofactor is Mg(2+).

The enzyme catalyses (2R)-2,3-dihydroxy-3-methylbutanoate = 3-methyl-2-oxobutanoate + H2O. It carries out the reaction (2R,3R)-2,3-dihydroxy-3-methylpentanoate = (S)-3-methyl-2-oxopentanoate + H2O. The protein operates within amino-acid biosynthesis; L-isoleucine biosynthesis; L-isoleucine from 2-oxobutanoate: step 3/4. It functions in the pathway amino-acid biosynthesis; L-valine biosynthesis; L-valine from pyruvate: step 3/4. In terms of biological role, functions in the biosynthesis of branched-chain amino acids. Catalyzes the dehydration of (2R,3R)-2,3-dihydroxy-3-methylpentanoate (2,3-dihydroxy-3-methylvalerate) into 2-oxo-3-methylpentanoate (2-oxo-3-methylvalerate) and of (2R)-2,3-dihydroxy-3-methylbutanoate (2,3-dihydroxyisovalerate) into 2-oxo-3-methylbutanoate (2-oxoisovalerate), the penultimate precursor to L-isoleucine and L-valine, respectively. The protein is Dihydroxy-acid dehydratase of Cytophaga hutchinsonii (strain ATCC 33406 / DSM 1761 / CIP 103989 / NBRC 15051 / NCIMB 9469 / D465).